An 888-amino-acid polypeptide reads, in one-letter code: Patched domain-containing protein 1 (888 aa).

Residues 20–40 traverse the membrane as a helical segment; that stretch reads FIASHPVFFASAPVLISILLG. 3 N-linked (GlcNAc...) asparagine glycosylation sites follow: Asn77, Asn133, and Asn167. Positions 268–427 constitute an SSD domain; it reads SERYLVTSLI…LSFYGSSLVF (160 aa). The next 2 helical transmembrane spans lie at 273–293 and 298–318; these read VTSL…QDCV and WLGL…AGII. Asn319 and Asn326 each carry an N-linked (GlcNAc...) asparagine glycan. The next 4 helical transmembrane spans lie at 328 to 348, 373 to 393, 407 to 427, and 502 to 522; these read TFLG…FEML, LSFS…ASPF, CIAI…SLVF, and PFVV…YLQV. Asn568, Asn599, and Asn608 each carry an N-linked (GlcNAc...) asparagine glycan. 2 helical membrane-spanning segments follow: residues 707-727 and 738-758; these read ALFL…NVWI and VIGF…LCLI. N-linked (GlcNAc...) asparagine glycosylation is present at Asn762. Residues 795-815 traverse the membrane as a helical segment; it reads GVAILQSYLCYIVGLIPLAAV. N-linked (GlcNAc...) asparagine glycosylation occurs at Asn818. The helical transmembrane segment at 826 to 846 threads the bilayer; it reads CLFLIAFVTFFHCFAILPVIL.

Belongs to the patched family. As to expression, widely expressed, including in various regions of the brain with highest expression in the gray and white cerebellum, followed by the cerebellar vermis and the pituitary gland.

The protein resides in the cell membrane. It localises to the cell projection. Its subcellular location is the dendritic spine. Required for the development and function of the thalamic reticular nucleus (TRN), a part of the thalamus that is critical for thalamocortical transmission, generation of sleep rhythms, sensorimotor processing and attention. Can bind cholesterol in vitro. The chain is Patched domain-containing protein 1 from Homo sapiens (Human).